A 499-amino-acid chain; its full sequence is RNA polymerase sigma factor SigA (499 aa).

Basic residues-rich tracts occupy residues 1-12 (MSSPKKNFKKPQ) and 77-87 (KKRRGRKPKHA). 2 disordered regions span residues 1–25 (MSSP…LNEE) and 68–89 (QENK…HAPL). Residues 252-322 (LVTSNLRLVV…TRAIADQART (71 aa)) form a sigma-70 factor domain-2 region. An Interaction with polymerase core subunit RpoC motif is present at residues 276 to 279 (DLIQ). Residues 331–412 (ETINRLAKAE…DTDAQMPDEF (82 aa)) form a sigma-70 factor domain-3 region. The tract at residues 425 to 480 (LLNNCLSEQEELIVRMRIGMPPYNETKTLDEVSQKIKIPREKIRQIETKAIRKLRQ) is sigma-70 factor domain-4. The segment at residues 453–472 (LDEVSQKIKIPREKIRQIET) is a DNA-binding region (H-T-H motif).

Belongs to the sigma-70 factor family. RpoD/SigA subfamily. Interacts transiently with the RNA polymerase catalytic core.

It is found in the cytoplasm. In terms of biological role, sigma factors are initiation factors that promote the attachment of RNA polymerase to specific initiation sites and are then released. This sigma factor is the primary sigma factor during exponential growth. This Mycoplasma pneumoniae (strain ATCC 29342 / M129 / Subtype 1) (Mycoplasmoides pneumoniae) protein is RNA polymerase sigma factor SigA.